Consider the following 855-residue polypeptide: Endochitinase 2 (855 aa).

A signal peptide spans 1–22; that stretch reads MGPTNILAAFIAVSSLFIQSLA. The region spanning 29-340 is the GH18 domain; it reads SNLAVYWGQG…DIMKEVLLRC (312 aa). N90 carries N-linked (GlcNAc...) asparagine glycosylation. Catalysis depends on E175, which acts as the Proton donor. The interval 341-672 is disordered; the sequence is DPDPPTSTVT…APSSSTTEDR (332 aa). Residues 346 to 400 show a composition bias toward low complexity; sequence TSTVTSTTSASTSTQTSSQSTTMETKTLSASTTPSSPSTVSPSSTMQTTSTGSTS. Polar residues predominate over residues 401–456; sequence IETVTTRSQEPPSTTISTRSASTEPVTTRSQEPPSTTISTRSASTETVTTRSQEPP. Low complexity predominate over residues 457-483; sequence STTISTWSASTETSTSSQDSPSTTIST. Over residues 484–521 the composition is skewed to polar residues; that stretch reads KSAPTGTVTTRSQDLPSTTISTRSPETETETATTKSQG. Residues 522–533 are compositionally biased toward low complexity; it reads SPSITLSTRSSS. Positions 534–555 are enriched in polar residues; the sequence is AETVSTRSQHSSSTTISTKSAP. The segment covering 556-567 has biased composition (low complexity); the sequence is TETGTTSEHSTS. A compositionally biased stretch (polar residues) spans 568-641; the sequence is MPVSTRSAST…SQTPTTIITG (74 aa). 2 stretches are compositionally biased toward low complexity: residues 642–652 and 659–672; these read TPSDPVSAPTT and TLTL…TEDR. G826 carries the GPI-anchor amidated glycine lipid modification. A propeptide spans 827-855 (removed in mature form); it reads SAMTVRSMDVVAKALITAGAAVLGLFLGL.

This sequence belongs to the glycosyl hydrolase 18 family. Chitinase class III subfamily.

The protein resides in the cell membrane. It catalyses the reaction Random endo-hydrolysis of N-acetyl-beta-D-glucosaminide (1-&gt;4)-beta-linkages in chitin and chitodextrins.. Its function is as follows. May be associated with endosporulation. This is Endochitinase 2 (CTS2) from Coccidioides posadasii (strain C735) (Valley fever fungus).